The following is a 644-amino-acid chain: MINVTLPDGSKRELPDGASPLDLAADISKSLAKAAIIATVDGQDWDLKRPLDGDAQVAIITRKDDKALEVIRHDTAHILAQAVQDLFPGTQVTIGPAIEDGFYYDFARSEPFTPEDFEAIEKRMGEIVDADLPFEREVWDRNDAIAKFEEMGEAYKAELIRDLPEDETITIYRQGEWFDLCLGPHLPSTGKIGKAFKLMKVAGAYWRGDHRNAMLQRIYGTAWADDKQLKAHLHRIEEAEKRDHRKLGKQMELFHFQEEAQGQVFWHPNGWRLYRTVTSYMRRRLEAAGYVEIRTPQLMDRKFWEASGHWDKYRENMFISSIDQEEKVLAVKPMNCPCHVQVFNQGQKSYRDLPLRMAEFGSCHRYEPSGSLHGLMRVRGFVQDDAHIFCTSDQITAEVSDFCELLKSVYADFGFEEPRIKFSDRPEQRVGSDEVWDQAEASLKAAAEASGLDYEYNPGDGAFYGPKLDFVVKDAIGREWQTGTIQCDFNLPERLDASFIGDDSEKHRPVMLHRAILGSLERFLGVLIESYAGKLPFWLAPRQVVIATITSDADGYAEEVKAAMVKAGLHAETDLRNEKINYKVREHSVGKVPVIAVVGRKEAEDGTLALRFLGEGGKTQEILSLADAIARLSEDAKAPDLKRV.

The TGS domain occupies 1-61 (MINVTLPDGS…DGDAQVAIIT (61 aa)). The tract at residues 243–536 (DHRKLGKQME…LIESYAGKLP (294 aa)) is catalytic. Residues C336, H387, and H513 each coordinate Zn(2+).

It belongs to the class-II aminoacyl-tRNA synthetase family. As to quaternary structure, homodimer. Zn(2+) serves as cofactor.

It is found in the cytoplasm. It catalyses the reaction tRNA(Thr) + L-threonine + ATP = L-threonyl-tRNA(Thr) + AMP + diphosphate + H(+). Catalyzes the attachment of threonine to tRNA(Thr) in a two-step reaction: L-threonine is first activated by ATP to form Thr-AMP and then transferred to the acceptor end of tRNA(Thr). Also edits incorrectly charged L-seryl-tRNA(Thr). In Maricaulis maris (strain MCS10) (Caulobacter maris), this protein is Threonine--tRNA ligase.